Consider the following 1341-residue polypeptide: DNA-directed RNA polymerase subunit beta (1341 aa).

This sequence belongs to the RNA polymerase beta chain family. As to quaternary structure, the RNAP catalytic core consists of 2 alpha, 1 beta, 1 beta' and 1 omega subunit. When a sigma factor is associated with the core the holoenzyme is formed, which can initiate transcription.

The catalysed reaction is RNA(n) + a ribonucleoside 5'-triphosphate = RNA(n+1) + diphosphate. DNA-dependent RNA polymerase catalyzes the transcription of DNA into RNA using the four ribonucleoside triphosphates as substrates. The polypeptide is DNA-directed RNA polymerase subunit beta (Vibrio cholerae serotype O1 (strain ATCC 39315 / El Tor Inaba N16961)).